Consider the following 185-residue polypeptide: Potassium-transporting ATPase KdpC subunit (185 aa).

Residues 8-28 (LGLVLIMFVLCGFIFPLTVTA) traverse the membrane as a helical segment. A disordered region spans residues 113–132 (GQKLSSDAVTTSGSGLDPDI). Residues 114–126 (QKLSSDAVTTSGS) are compositionally biased toward polar residues.

It belongs to the KdpC family. In terms of assembly, the system is composed of three essential subunits: KdpA, KdpB and KdpC.

Its subcellular location is the cell membrane. Functionally, part of the high-affinity ATP-driven potassium transport (or Kdp) system, which catalyzes the hydrolysis of ATP coupled with the electrogenic transport of potassium into the cytoplasm. This subunit acts as a catalytic chaperone that increases the ATP-binding affinity of the ATP-hydrolyzing subunit KdpB by the formation of a transient KdpB/KdpC/ATP ternary complex. The protein is Potassium-transporting ATPase KdpC subunit of Staphylococcus haemolyticus (strain JCSC1435).